A 473-amino-acid chain; its full sequence is Serine palmitoyltransferase 1 (473 aa).

Topologically, residues M1–Q15 are lumenal. Residues M1–P66 form an interaction with SPTLC2 region. The chain crosses the membrane as a helical span at residues A16–I36. The Cytoplasmic segment spans residues R37–L473. Y164 is subject to Phosphotyrosine; by ABL.

Belongs to the class-II pyridoxal-phosphate-dependent aminotransferase family. In terms of assembly, component of the serine palmitoyltransferase (SPT) complex, which is also composed of SPTLC2 or SPTLC3 and SPTSSA or SPTSSB. The heterodimer with SPTLC2 or SPTLC3 forms the catalytic core of the enzyme, while SPTSSA or SPTSSB subunits determine substrate specificity. SPT also interacts with ORMDL proteins, especially ORMDL3, which negatively regulate SPT activity in the presence of ceramides. Forms dimers of heterodimers with SPTLC2. Interacts with RTN4. Pyridoxal 5'-phosphate serves as cofactor. Post-translationally, phosphorylation at Tyr-164 inhibits activity and promotes cell survival.

It is found in the endoplasmic reticulum membrane. It carries out the reaction L-serine + hexadecanoyl-CoA + H(+) = 3-oxosphinganine + CO2 + CoA. The catalysed reaction is octadecanoyl-CoA + L-serine + H(+) = 3-oxoeicosasphinganine + CO2 + CoA. It catalyses the reaction tetradecanoyl-CoA + L-serine + H(+) = 3-oxohexadecasphinganine + CO2 + CoA. The enzyme catalyses dodecanoyl-CoA + L-serine + H(+) = 3-oxotetradecasphinganine + CO2 + CoA. It functions in the pathway lipid metabolism; sphingolipid metabolism. Its activity is regulated as follows. SPT complex catalytic activity is negatively regulated by ORMDL proteins, including ORMDL3, in the presence of ceramides. This mechanism allows to maintain ceramide levels at sufficient concentrations for the production of complex sphingolipids, but which prevents the accumulation of ceramides to levels that trigger apoptosis. Component of the serine palmitoyltransferase multisubunit enzyme (SPT) that catalyzes the initial and rate-limiting step in sphingolipid biosynthesis by condensing L-serine and activated acyl-CoA (most commonly palmitoyl-CoA) to form long-chain bases. The SPT complex is also composed of SPTLC2 or SPTLC3 and SPTSSA or SPTSSB. Within this complex, the heterodimer with SPTLC2 or SPTLC3 forms the catalytic core. The composition of the serine palmitoyltransferase (SPT) complex determines the substrate preference. The SPTLC1-SPTLC2-SPTSSA complex shows a strong preference for C16-CoA substrate, while the SPTLC1-SPTLC3-SPTSSA isozyme uses both C14-CoA and C16-CoA as substrates, with a slight preference for C14-CoA. The SPTLC1-SPTLC2-SPTSSB complex shows a strong preference for C18-CoA substrate, while the SPTLC1-SPTLC3-SPTSSB isozyme displays an ability to use a broader range of acyl-CoAs, without apparent preference. Required for adipocyte cell viability and metabolic homeostasis. This is Serine palmitoyltransferase 1 (SPTLC1) from Cricetulus griseus (Chinese hamster).